The sequence spans 561 residues: Potassium-transporting ATPase potassium-binding subunit (561 aa).

A run of 12 helical transmembrane segments spans residues Leu-5–Val-25, Tyr-60–Leu-80, Val-86–Ile-106, Val-130–Leu-150, Ile-177–Ser-197, Pro-247–Thr-267, Leu-281–Ala-301, Phe-324–Val-344, Gly-376–Gly-396, Ala-415–Leu-435, Ile-491–Leu-511, and Gly-533–Leu-553.

The protein belongs to the KdpA family. As to quaternary structure, the system is composed of three essential subunits: KdpA, KdpB and KdpC.

The protein resides in the cell membrane. Its function is as follows. Part of the high-affinity ATP-driven potassium transport (or Kdp) system, which catalyzes the hydrolysis of ATP coupled with the electrogenic transport of potassium into the cytoplasm. This subunit binds the extracellular potassium ions and delivers the ions to the membrane domain of KdpB through an intramembrane tunnel. This Rhodococcus erythropolis (strain PR4 / NBRC 100887) protein is Potassium-transporting ATPase potassium-binding subunit.